The chain runs to 480 residues: MTLSFTARWRDELPATYTALLPTPLKNARLIWYNDELAQQLAIPASLFDVTNGAGVWGGETLLPGMSPVAQVYSGHQFGVWAGQLGDGRGILLGEQLLADGSTLDWHLKGAGLTPYSRMGDGRAVLRSTIRESLASEAMHYLGIPTTRALSIVASDTPVQRETQETGAMLMRLAQSHMRFGHFEHFYYRREPEKVQQLADFAIRHYWPQWQDVPEKYALWFEEVAARTGRLIAEWQTVGFSHGVMNTDNMSILGLTIDYGPFGFLDDYDPGFIGNHSDHQGRYRFDNQPSVALWNLQRLAQTLTPFIEIDALNRALDRYQDALLTHYGQRMRQKLGFFTEQKDDNALLNELFSLMAREGSDYTRTFRMLSHTEQQSASSPLRDTFIDRTAFDAWFERYRARLRTEAVDDALRQQQMQRVNPAVVLRNWLAQRAIDAAEQGDMAELHRLHEVLRQPFTDRDDDYASRPPEWGKRLEVSCSS.

ATP is bound by residues Gly-86, Gly-88, Arg-89, Lys-109, Asp-121, Gly-122, Arg-172, and Arg-179. The active-site Proton acceptor is Asp-248. Residues Asn-249 and Asp-258 each contribute to the Mg(2+) site. ATP is bound at residue Asp-258.

This sequence belongs to the SELO family. It depends on Mg(2+) as a cofactor. Requires Mn(2+) as cofactor.

The catalysed reaction is L-seryl-[protein] + ATP = 3-O-(5'-adenylyl)-L-seryl-[protein] + diphosphate. It carries out the reaction L-threonyl-[protein] + ATP = 3-O-(5'-adenylyl)-L-threonyl-[protein] + diphosphate. It catalyses the reaction L-tyrosyl-[protein] + ATP = O-(5'-adenylyl)-L-tyrosyl-[protein] + diphosphate. The enzyme catalyses L-histidyl-[protein] + UTP = N(tele)-(5'-uridylyl)-L-histidyl-[protein] + diphosphate. The catalysed reaction is L-seryl-[protein] + UTP = O-(5'-uridylyl)-L-seryl-[protein] + diphosphate. It carries out the reaction L-tyrosyl-[protein] + UTP = O-(5'-uridylyl)-L-tyrosyl-[protein] + diphosphate. Nucleotidyltransferase involved in the post-translational modification of proteins. It can catalyze the addition of adenosine monophosphate (AMP) or uridine monophosphate (UMP) to a protein, resulting in modifications known as AMPylation and UMPylation. This Salmonella schwarzengrund (strain CVM19633) protein is Protein nucleotidyltransferase YdiU.